Reading from the N-terminus, the 355-residue chain is GTP 3',8-cyclase (355 aa).

The 227-residue stretch at 16–242 folds into the Radical SAM core domain; it reads RYGRRATDMR…PDPRARDGAP (227 aa). Arg-25 is a GTP binding site. Residues Cys-32 and Cys-36 each coordinate [4Fe-4S] cluster. An S-adenosyl-L-methionine-binding site is contributed by Tyr-38. Residue Cys-39 coordinates [4Fe-4S] cluster. Arg-76 provides a ligand contact to GTP. Gly-80 lines the S-adenosyl-L-methionine pocket. Thr-107 is a binding site for GTP. Position 131 (Ser-131) interacts with S-adenosyl-L-methionine. Residue Lys-168 participates in GTP binding. Residue Met-202 coordinates S-adenosyl-L-methionine. [4Fe-4S] cluster-binding residues include Cys-277 and Cys-280. Residue 282–284 participates in GTP binding; that stretch reads RTR. Cys-294 is a [4Fe-4S] cluster binding site.

This sequence belongs to the radical SAM superfamily. MoaA family. In terms of assembly, monomer. It depends on [4Fe-4S] cluster as a cofactor.

The catalysed reaction is GTP + AH2 + S-adenosyl-L-methionine = (8S)-3',8-cyclo-7,8-dihydroguanosine 5'-triphosphate + 5'-deoxyadenosine + L-methionine + A + H(+). It participates in cofactor biosynthesis; molybdopterin biosynthesis. Functionally, catalyzes, together with MoaC, the conversion of 5'-GTP to cyclic pyranopterin monophosphate (cPMP or molybdopterin precursor Z). In terms of biological role, catalyzes the cyclization of GTP to (8S)-3',8-cyclo-7,8-dihydroguanosine 5'-triphosphate. This is GTP 3',8-cyclase from Paenarthrobacter nicotinovorans (Arthrobacter nicotinovorans).